Reading from the N-terminus, the 270-residue chain is Gene 1 protein (270 aa).

A disordered region spans residues W225 to P249.

This Mycobacterium (Mycobacteriophage D29) protein is Gene 1 protein (1).